The primary structure comprises 116 residues: uncharacterized protein (116 aa).

The next 3 helical transmembrane spans lie at 8–28 (FMIY…VSFA), 39–59 (GLLL…NPPF), and 75–95 (FLLI…YLMV).

This sequence to M.jannaschii MJ1580.

The protein localises to the cell membrane. This is an uncharacterized protein from Methanothermobacter thermautotrophicus (strain ATCC 29096 / DSM 1053 / JCM 10044 / NBRC 100330 / Delta H) (Methanobacterium thermoautotrophicum).